Here is a 155-residue protein sequence, read N- to C-terminus: Large ribosomal subunit protein uL22c (155 aa).

It belongs to the universal ribosomal protein uL22 family. Part of the 50S ribosomal subunit.

The protein resides in the plastid. The protein localises to the chloroplast. This protein binds specifically to 23S rRNA. In terms of biological role, the globular domain of the protein is located near the polypeptide exit tunnel on the outside of the subunit, while an extended beta-hairpin is found that lines the wall of the exit tunnel in the center of the 70S ribosome. The sequence is that of Large ribosomal subunit protein uL22c (rpl22) from Coffea arabica (Arabian coffee).